We begin with the raw amino-acid sequence, 1384 residues long: CHD3-type chromatin-remodeling factor PICKLE (1384 aa).

At S23 the chain carries Phosphoserine. The PHD-type zinc-finger motif lies at 49–96 (ENACQACGESTNLVSCNTCTYAFHAKCLVPPLKDASVENWRCPECVSP). Chromo domains lie at 98–180 (NEID…NSED) and 190–249 (TTVD…RSKD). Residues 285 to 471 (RFSWSKQTHV…FMLMHFLDAG (187 aa)) form the Helicase ATP-binding domain. Residue 298-305 (DEMGLGKT) participates in ATP binding. Positions 376–383 (KKKKSGQI) match the Nuclear localization signal motif. Positions 422–425 (DEGH) match the DEAH box motif. Residues 599 to 760 (LLDKMMVKLK…NINQEELDDI (162 aa)) enclose the Helicase C-terminal domain. Positions 893–912 (AGLEDVSSDGDESYEAESTD) are enriched in acidic residues. Disordered regions lie at residues 893–941 (AGLE…TPLM), 1122–1152 (GLQG…NNNA), 1313–1344 (SDQS…PLRG), and 1365–1384 (VDVK…MVVD). Polar residues predominate over residues 1138–1152 (TNQNPGSVITGNNNA). 2 stretches are compositionally biased toward basic and acidic residues: residues 1316 to 1341 (SKSH…ETKP) and 1367 to 1384 (VKME…MVVD).

It belongs to the SNF2/RAD54 helicase family. Interacts with TAF12B. As to expression, mostly expressed in tissue undergoing significant differentiation (meristems and primordia) such as young seedlings, influorescent tissue and young siliques, but not in endosperm and seed coat (at protein level). Levels decrease as organs age. Also present in trichomes.

The protein resides in the nucleus. In terms of biological role, chromatin remodeling factor that represses the expression of embryonic trait genes (such as NFYB9/LEC1) upon and after seed germination and thus enables the developmental switch to post-germinative growth. Silences some MADS-box proteins such as PHE1 and PHE2. Plays a role during carpel differentiation. Regulates late processes in cytokinin signaling. The polypeptide is CHD3-type chromatin-remodeling factor PICKLE (PKL) (Arabidopsis thaliana (Mouse-ear cress)).